The chain runs to 401 residues: MKILVMNCGSSSLKYQLLDMENNKVLAKGLAERIGINDSLLTHQAEGKEKVKIQRDMKNHKEAIQLVLEVLVDKEIGVIKDMKEIDAVGHRVVHGGEYFTDSVLIDDEVIKKLEDCIDLAPLHNPANIEGIKACQQIMPGVPMVAVFDTAFHQTMPDYAYIYPIPYEYYEKHRIRRYGFHGTSHKYVSMRAAEILGRPIEELKIVTCHLGNGASITAVKNGKSIDTSMGFTPLEGLAMGTRSGSIDPSIVTFLMEKEGLTAHQVVDILNKKSGVYGISGISNDFRDIENAAFNEGNKRAMLALKVFAYIAKKTIGAYAAAMGGVDAIVFTAGVGENGPEMREFILEGLEFLGFTLDKEKNRVRGKEAIISTEDSRVKVMVIPTNEEYMIAKDTEKLVKGIK.

Asn-7 serves as a coordination point for Mg(2+). Lys-14 contacts ATP. Arg-91 provides a ligand contact to substrate. The Proton donor/acceptor role is filled by Asp-148. ATP is bound by residues 208–212 (HLGNG), 283–285 (DFR), and 332–336 (GVGEN). A Mg(2+)-binding site is contributed by Glu-385.

Belongs to the acetokinase family. In terms of assembly, homodimer. Requires Mg(2+) as cofactor. Mn(2+) is required as a cofactor.

Its subcellular location is the cytoplasm. It catalyses the reaction acetate + ATP = acetyl phosphate + ADP. The protein operates within metabolic intermediate biosynthesis; acetyl-CoA biosynthesis; acetyl-CoA from acetate: step 1/2. Catalyzes the formation of acetyl phosphate from acetate and ATP. Can also catalyze the reverse reaction. The polypeptide is Acetate kinase (Caldanaerobacter subterraneus subsp. tengcongensis (strain DSM 15242 / JCM 11007 / NBRC 100824 / MB4) (Thermoanaerobacter tengcongensis)).